Reading from the N-terminus, the 80-residue chain is Kappa-actitoxin-Avd4i (80 aa).

Residues 1–19 form the signal peptide; it reads MNKALFLCLVVLCAAVVFA. A propeptide spanning residues 20–31 is cleaved from the precursor; sequence AEDLQKAKHAPF. 3 cysteine pairs are disulfide-bonded: C41/C76, C43/C69, and C59/C77.

This sequence belongs to the sea anemone type 3 (BDS) potassium channel toxin family. Weakly expressed in the ectodermal tissue from the distal and proximal tentacles, body wall, and oral disk.

It is found in the secreted. Its subcellular location is the nematocyst. Its function is as follows. Blocks Kv3 voltage-gated potassium channels. Reduces blood pressure. The sequence is that of Kappa-actitoxin-Avd4i from Anemonia viridis (Snakelocks anemone).